The sequence spans 199 residues: Adenylyl-sulfate kinase (199 aa).

31–38 (GLSGSGKS) lines the ATP pocket. The Phosphoserine intermediate role is filled by S105.

The protein belongs to the APS kinase family.

It carries out the reaction adenosine 5'-phosphosulfate + ATP = 3'-phosphoadenylyl sulfate + ADP + H(+). Its pathway is sulfur metabolism; hydrogen sulfide biosynthesis; sulfite from sulfate: step 2/3. In terms of biological role, catalyzes the synthesis of activated sulfate. The protein is Adenylyl-sulfate kinase of Marinobacter nauticus (strain ATCC 700491 / DSM 11845 / VT8) (Marinobacter aquaeolei).